The primary structure comprises 102 residues: Putative UPF0320 protein YMR326C (102 aa).

It belongs to the UPF0320 family.

In Saccharomyces cerevisiae (strain ATCC 204508 / S288c) (Baker's yeast), this protein is Putative UPF0320 protein YMR326C.